The chain runs to 116 residues: MEEYHRHCDEVGFNAEEAHNIVKECVDGVLGGEDYNHNNINQWTASIVEQSLTHLVKLGKAYKYIVTCAVVQKSAYGFHTASSCFWDTTSDGTCTVRWENRTMNCIVNVFAIAIVL.

Tyr-4 carries the 3'-nitrotyrosine modification.

The protein belongs to the dynein light chain Tctex-type family. In terms of assembly, homodimer. The cytoplasmic dynein 1 complex consists of two catalytic heavy chains (HCs) and a number of non-catalytic subunits presented by intermediate chains (ICs), light intermediate chains (LICs) and light chains (LCs); the composition seems to vary in respect to the IC, LIC and LC composition. The heavy chain homodimer serves as a scaffold for the probable homodimeric assembly of the respective non-catalytic subunits. The ICs and LICs bind directly to the HC dimer and the LCs assemble on the IC dimer. DYNLT1 and DYNLT3 compete for association with dynein IC (DYNC1I1 or DYNC1I2). Self-associates. Interacts with DYNC1I1 and DYNC1I2. Interacts with BUB3. Interacts with SATB1 in nucleus to form complex with matrix attachment regions (MARs) of DNA.

The protein resides in the nucleus. It localises to the cytoplasm. Its subcellular location is the cytoskeleton. The protein localises to the chromosome. It is found in the centromere. The protein resides in the kinetochore. Functionally, acts as one of several non-catalytic accessory components of the cytoplasmic dynein 1 complex that are thought to be involved in linking dynein to cargos and to adapter proteins that regulate dynein function. Cytoplasmic dynein 1 acts as a motor for the intracellular retrograde motility of vesicles and organelles along microtubules. Probably binds BUB3 as part of transport cargo. Required for the efficient progression through mitosis. This Homo sapiens (Human) protein is Dynein light chain Tctex-type 3 (DYNLT3).